A 130-amino-acid polypeptide reads, in one-letter code: Small ribosomal subunit protein uS8 (130 aa).

The protein belongs to the universal ribosomal protein uS8 family. As to quaternary structure, part of the 30S ribosomal subunit. Contacts proteins S5 and S12.

Functionally, one of the primary rRNA binding proteins, it binds directly to 16S rRNA central domain where it helps coordinate assembly of the platform of the 30S subunit. The polypeptide is Small ribosomal subunit protein uS8 (Shewanella frigidimarina (strain NCIMB 400)).